Here is a 382-residue protein sequence, read N- to C-terminus: Mannitol-1-phosphate 5-dehydrogenase (382 aa).

3–14 (ALHFGAGNIGRG) is a binding site for NAD(+).

This sequence belongs to the mannitol dehydrogenase family.

The enzyme catalyses D-mannitol 1-phosphate + NAD(+) = beta-D-fructose 6-phosphate + NADH + H(+). This Tolumonas auensis (strain DSM 9187 / NBRC 110442 / TA 4) protein is Mannitol-1-phosphate 5-dehydrogenase.